The chain runs to 78 residues: Acyl carrier protein (78 aa).

Positions 2-77 constitute a Carrier domain; that stretch reads STIEERVKKI…AAIDFINANQ (76 aa). S37 is subject to O-(pantetheine 4'-phosphoryl)serine.

It belongs to the acyl carrier protein (ACP) family. 4'-phosphopantetheine is transferred from CoA to a specific serine of apo-ACP by AcpS. This modification is essential for activity because fatty acids are bound in thioester linkage to the sulfhydryl of the prosthetic group.

It is found in the cytoplasm. It participates in lipid metabolism; fatty acid biosynthesis. Its function is as follows. Carrier of the growing fatty acid chain in fatty acid biosynthesis. The polypeptide is Acyl carrier protein (Yersinia pseudotuberculosis serotype O:1b (strain IP 31758)).